Reading from the N-terminus, the 111-residue chain is Cornifelin (111 aa).

This sequence belongs to the cornifelin family. Directly or indirectly cross-linked to CE proteins loricin and involucrin (IVL).

The protein resides in the cytoplasm. Its function is as follows. Part of the insoluble cornified cell envelope (CE) of stratified squamous epithelia. The chain is Cornifelin (CNFN) from Bos taurus (Bovine).